A 106-amino-acid polypeptide reads, in one-letter code: CLAVATA3/ESR (CLE)-related protein 21 (106 aa).

A signal peptide spans 1–31 (MLILSSRYAMKRDVLIIVIFTVLVLIIISRS). N-linked (GlcNAc...) asparagine glycosylation occurs at Asn-47. Residues 72–82 (KVRRRSSRFRR) are compositionally biased toward basic residues. The tract at residues 72–106 (KVRRRSSRFRRKTDGDEEEEEKRSIPTGPNPLHNK) is disordered. Residues Pro-97 and Pro-100 each carry the hydroxyproline modification. Pro-100 is a glycosylation site (O-linked (Ara...) hydroxyproline).

This sequence belongs to the CLV3/ESR signal peptide family. The O-glycosylation (arabinosylation) of the hydroxyproline Pro-100 enhances binding affinity of the CLE21p peptide for its receptor. In terms of tissue distribution, mostly expressed in leaves and apex, and, to a lower extent, in seedlings, flowers, stems and siliques.

The protein resides in the secreted. Its subcellular location is the extracellular space. In terms of biological role, extracellular signal peptide that regulates cell fate. Represses root apical meristem maintenance. Regulates the transition of protophloem cells from proliferation to differentiation, thus impinging on postembryonic growth capacity of the root meristem; this signaling pathway requires CRN and CLV2. This Arabidopsis thaliana (Mouse-ear cress) protein is CLAVATA3/ESR (CLE)-related protein 21.